The chain runs to 376 residues: Dual-specificity RNA methyltransferase RlmN (376 aa).

Glutamate 95 functions as the Proton acceptor in the catalytic mechanism. The 239-residue stretch at 101–339 folds into the Radical SAM core domain; sequence EKERATLCVS…CIVRRPRGDD (239 aa). Cysteines 108 and 344 form a disulfide. Residues cysteine 115, cysteine 119, and cysteine 122 each coordinate [4Fe-4S] cluster. Residues 169–170, serine 201, 223–225, and asparagine 301 each bind S-adenosyl-L-methionine; these read GE and SLH. Residue cysteine 344 is the S-methylcysteine intermediate of the active site.

It belongs to the radical SAM superfamily. RlmN family. [4Fe-4S] cluster serves as cofactor.

The protein localises to the cytoplasm. It catalyses the reaction adenosine(2503) in 23S rRNA + 2 reduced [2Fe-2S]-[ferredoxin] + 2 S-adenosyl-L-methionine = 2-methyladenosine(2503) in 23S rRNA + 5'-deoxyadenosine + L-methionine + 2 oxidized [2Fe-2S]-[ferredoxin] + S-adenosyl-L-homocysteine. The catalysed reaction is adenosine(37) in tRNA + 2 reduced [2Fe-2S]-[ferredoxin] + 2 S-adenosyl-L-methionine = 2-methyladenosine(37) in tRNA + 5'-deoxyadenosine + L-methionine + 2 oxidized [2Fe-2S]-[ferredoxin] + S-adenosyl-L-homocysteine. In terms of biological role, specifically methylates position 2 of adenine 2503 in 23S rRNA and position 2 of adenine 37 in tRNAs. m2A2503 modification seems to play a crucial role in the proofreading step occurring at the peptidyl transferase center and thus would serve to optimize ribosomal fidelity. The sequence is that of Dual-specificity RNA methyltransferase RlmN from Pseudoalteromonas translucida (strain TAC 125).